Reading from the N-terminus, the 493-residue chain is Dipeptide permease D (493 aa).

Transmembrane regions (helical) follow at residues 14 to 34 (VVAL…LLIL), 49 to 69 (ELFS…GYLA), 91 to 111 (LVLG…AIIV), 138 to 158 (GGFS…PIAC), 167 to 187 (WAMG…IFLC), 212 to 232 (NWGW…VLFW), 235 to 255 (WSVY…AKIY), 267 to 287 (LGLI…AQQG), 312 to 332 (MFQS…AWLV), 344 to 364 (IWGK…ILTL), 379 to 399 (LMVL…PVAM), 413 to 433 (VLTG…AGVI), and 458 to 478 (VFEQ…LIWL).

Belongs to the major facilitator superfamily. Proton-dependent oligopeptide transporter (POT/PTR) (TC 2.A.17) family. DtpD subfamily.

The protein resides in the cell inner membrane. Functionally, probable proton-dependent permease that transports dipeptides. This is Dipeptide permease D from Salmonella typhimurium (strain 14028s / SGSC 2262).